The primary structure comprises 324 residues: Acetyl-coenzyme A carboxylase carboxyl transferase subunit alpha (324 aa).

The CoA carboxyltransferase C-terminal domain maps to 44-298; sequence RFQDKLTKLQ…RKELIKQLNI (255 aa).

It belongs to the AccA family. As to quaternary structure, acetyl-CoA carboxylase is a heterohexamer composed of biotin carboxyl carrier protein (accB), biotin carboxylase (accC) and two subunits each of ACCase subunit alpha (accA) and ACCase subunit beta (accD).

It localises to the plastid. It is found in the chloroplast. The enzyme catalyses N(6)-carboxybiotinyl-L-lysyl-[protein] + acetyl-CoA = N(6)-biotinyl-L-lysyl-[protein] + malonyl-CoA. The protein operates within lipid metabolism; malonyl-CoA biosynthesis; malonyl-CoA from acetyl-CoA: step 1/1. Component of the acetyl coenzyme A carboxylase (ACC) complex. First, biotin carboxylase catalyzes the carboxylation of biotin on its carrier protein (BCCP) and then the CO(2) group is transferred by the carboxyltransferase to acetyl-CoA to form malonyl-CoA. The polypeptide is Acetyl-coenzyme A carboxylase carboxyl transferase subunit alpha (Porphyra purpurea (Red seaweed)).